Consider the following 120-residue polypeptide: UPF0231 protein YacL (120 aa).

Belongs to the UPF0231 family.

This is UPF0231 protein YacL from Salmonella agona (strain SL483).